Consider the following 339-residue polypeptide: MKHLKNNTKKFTALLFALLFSMSIAGCNMIEKTPEAIEKSPVAKVGKKTITRGELDTYPILAEQLTKLKEQFGGDLSKNAEIKDQLIQFKSQVLEQMIQEEIVFEKSEELKVDNAKVEKEVEKNLKNFMDQGFQGNKDKYKEDLKKMGTTEESIKRFFKAQVITEEVSKQVVKDVKVDDNTAKKHYEESKYTFTVNKPTFHAQHVLVKTEEEAKKVKARLDKGEDIKKIAKELSIDPSAKENSGDLGKAPYSSMVKPFADAIVKLNKGEISQPVKSQFGYHVIKLIDKDEVTFKDFNSVKEQIKKDLLETEKRKVFNEKIEQWKKELKVETKKYEKNII.

The signal sequence occupies residues 1-26 (MKHLKNNTKKFTALLFALLFSMSIAG). Residue Cys-27 is the site of N-palmitoyl cysteine attachment. Cys-27 carries the S-diacylglycerol cysteine lipid modification. The 91-residue stretch at 197–287 (KPTFHAQHVL…FGYHVIKLID (91 aa)) folds into the PpiC domain.

This sequence belongs to the PrsA family.

It is found in the cell membrane. The catalysed reaction is [protein]-peptidylproline (omega=180) = [protein]-peptidylproline (omega=0). Plays a major role in protein secretion by helping the post-translocational extracellular folding of several secreted proteins. The protein is Foldase protein PrsA of Clostridium tetani (strain Massachusetts / E88).